Reading from the N-terminus, the 70-residue chain is Sec-independent protein translocase protein TatA (70 aa).

A helical transmembrane segment spans residues 1–21 (MGIGVWELLLLFLIVLVVFGT). Residues 42 to 70 (MSENEDKPSEGGARTLEGEVVDKKEKDKV) form a disordered region. Residues 57–70 (LEGEVVDKKEKDKV) show a composition bias toward basic and acidic residues.

This sequence belongs to the TatA/E family. In terms of assembly, the Tat system comprises two distinct complexes: a TatABC complex, containing multiple copies of TatA, TatB and TatC subunits, and a separate TatA complex, containing only TatA subunits. Substrates initially bind to the TatABC complex, which probably triggers association of the separate TatA complex to form the active translocon.

It localises to the cell inner membrane. Its function is as follows. Part of the twin-arginine translocation (Tat) system that transports large folded proteins containing a characteristic twin-arginine motif in their signal peptide across membranes. TatA could form the protein-conducting channel of the Tat system. The chain is Sec-independent protein translocase protein TatA from Methylococcus capsulatus (strain ATCC 33009 / NCIMB 11132 / Bath).